A 144-amino-acid chain; its full sequence is Elicitor-responsive protein 3 (144 aa).

Positions 1–103 constitute a C2 domain; the sequence is MVQGTLEVLL…YTEGSIPPTV (103 aa). The Ca(2+) site is built by Asp20, Asp26, Asp73, Asp75, and Asp81. The interval 123–144 is disordered; sequence TPEDDRDRGLSEEDIGGWKQSS.

Ca(2+) serves as cofactor.

The protein is Elicitor-responsive protein 3 (ERG3) of Oryza sativa subsp. indica (Rice).